A 644-amino-acid polypeptide reads, in one-letter code: Chaperone protein HtpG (644 aa).

The segment at 1 to 352 (MNARVEQLEF…AQDMSLNVSR (352 aa)) is a; substrate-binding. Residues 353-566 (EILQQDRQIK…AFGITPALAR (214 aa)) are b. The tract at residues 567-644 (LYRASGQDIP…ILADRLARTL (78 aa)) is c.

It belongs to the heat shock protein 90 family. In terms of assembly, homodimer.

The protein resides in the cytoplasm. Its function is as follows. Molecular chaperone. Has ATPase activity. The sequence is that of Chaperone protein HtpG from Mycolicibacterium paratuberculosis (strain ATCC BAA-968 / K-10) (Mycobacterium paratuberculosis).